A 162-amino-acid polypeptide reads, in one-letter code: SsrA-binding protein (162 aa).

The protein belongs to the SmpB family.

It is found in the cytoplasm. Its function is as follows. Required for rescue of stalled ribosomes mediated by trans-translation. Binds to transfer-messenger RNA (tmRNA), required for stable association of tmRNA with ribosomes. tmRNA and SmpB together mimic tRNA shape, replacing the anticodon stem-loop with SmpB. tmRNA is encoded by the ssrA gene; the 2 termini fold to resemble tRNA(Ala) and it encodes a 'tag peptide', a short internal open reading frame. During trans-translation Ala-aminoacylated tmRNA acts like a tRNA, entering the A-site of stalled ribosomes, displacing the stalled mRNA. The ribosome then switches to translate the ORF on the tmRNA; the nascent peptide is terminated with the 'tag peptide' encoded by the tmRNA and targeted for degradation. The ribosome is freed to recommence translation, which seems to be the essential function of trans-translation. In Granulibacter bethesdensis (strain ATCC BAA-1260 / CGDNIH1), this protein is SsrA-binding protein.